A 231-amino-acid polypeptide reads, in one-letter code: Orotate phosphoribosyltransferase (231 aa).

Residues Lys-27, 79–80, Arg-106, Lys-107, Lys-110, His-112, and 133–141 each bind 5-phospho-alpha-D-ribose 1-diphosphate; these read YK and DDVMTAGTA. Positions 137 and 166 each coordinate orotate.

It belongs to the purine/pyrimidine phosphoribosyltransferase family. PyrE subfamily. As to quaternary structure, homodimer. It depends on Mg(2+) as a cofactor.

It carries out the reaction orotidine 5'-phosphate + diphosphate = orotate + 5-phospho-alpha-D-ribose 1-diphosphate. It functions in the pathway pyrimidine metabolism; UMP biosynthesis via de novo pathway; UMP from orotate: step 1/2. Its function is as follows. Catalyzes the transfer of a ribosyl phosphate group from 5-phosphoribose 1-diphosphate to orotate, leading to the formation of orotidine monophosphate (OMP). In Bifidobacterium animalis subsp. lactis (strain AD011), this protein is Orotate phosphoribosyltransferase.